Here is a 277-residue protein sequence, read N- to C-terminus: Sulfur carrier protein FdhD (277 aa).

Cys123 acts as the Cysteine persulfide intermediate in catalysis.

It belongs to the FdhD family.

The protein resides in the cytoplasm. In terms of biological role, required for formate dehydrogenase (FDH) activity. Acts as a sulfur carrier protein that transfers sulfur from IscS to the molybdenum cofactor prior to its insertion into FDH. The chain is Sulfur carrier protein FdhD from Pectobacterium atrosepticum (strain SCRI 1043 / ATCC BAA-672) (Erwinia carotovora subsp. atroseptica).